The sequence spans 254 residues: Triosephosphate isomerase (254 aa).

9-11 (NWK) is a substrate binding site. His-98 (electrophile) is an active-site residue. Catalysis depends on Glu-170, which acts as the Proton acceptor. Residues Gly-176, Ser-215, and 236 to 237 (GG) contribute to the substrate site.

This sequence belongs to the triosephosphate isomerase family. Homodimer.

The protein localises to the cytoplasm. It carries out the reaction D-glyceraldehyde 3-phosphate = dihydroxyacetone phosphate. The protein operates within carbohydrate biosynthesis; gluconeogenesis. It participates in carbohydrate degradation; glycolysis; D-glyceraldehyde 3-phosphate from glycerone phosphate: step 1/1. Involved in the gluconeogenesis. Catalyzes stereospecifically the conversion of dihydroxyacetone phosphate (DHAP) to D-glyceraldehyde-3-phosphate (G3P). This is Triosephosphate isomerase from Buchnera aphidicola subsp. Cinara cedri (strain Cc).